The following is a 307-amino-acid chain: Ribosomal RNA small subunit methyltransferase H (307 aa).

S-adenosyl-L-methionine-binding positions include 31–33 (GGH), aspartate 51, tyrosine 83, aspartate 97, and glutamine 104.

This sequence belongs to the methyltransferase superfamily. RsmH family.

It is found in the cytoplasm. It carries out the reaction cytidine(1402) in 16S rRNA + S-adenosyl-L-methionine = N(4)-methylcytidine(1402) in 16S rRNA + S-adenosyl-L-homocysteine + H(+). In terms of biological role, specifically methylates the N4 position of cytidine in position 1402 (C1402) of 16S rRNA. The sequence is that of Ribosomal RNA small subunit methyltransferase H from Buchnera aphidicola subsp. Cinara cedri (strain Cc).